A 255-amino-acid chain; its full sequence is Hemin import ATP-binding protein HmuV (255 aa).

Positions 2 to 238 constitute an ABC transporter domain; sequence LRVENLHVRR…EPLKAVFGLE (237 aa). Residue 34 to 41 participates in ATP binding; that stretch reads GPNGAGKS.

The protein belongs to the ABC transporter superfamily. Heme (hemin) importer (TC 3.A.1.14.5) family. In terms of assembly, the complex is composed of two ATP-binding proteins (HmuV), two transmembrane proteins (HmuU) and a solute-binding protein (HmuT).

Its subcellular location is the cell inner membrane. Its function is as follows. Part of the ABC transporter complex HmuTUV involved in hemin import. Responsible for energy coupling to the transport system. This chain is Hemin import ATP-binding protein HmuV, found in Pseudomonas fluorescens (strain ATCC BAA-477 / NRRL B-23932 / Pf-5).